We begin with the raw amino-acid sequence, 289 residues long: Serine/threonine-protein phosphatase Pgam5, mitochondrial (289 aa).

Residues 7–23 (FACGTGAGLAAYYLQRL) form a helical membrane-spanning segment.

This sequence belongs to the phosphoglycerate mutase family. BPG-dependent PGAM subfamily. In terms of assembly, interacts with Pk92B/ASK1.

Its subcellular location is the mitochondrion outer membrane. It catalyses the reaction O-phospho-L-seryl-[protein] + H2O = L-seryl-[protein] + phosphate. The catalysed reaction is O-phospho-L-threonyl-[protein] + H2O = L-threonyl-[protein] + phosphate. In terms of biological role, displays phosphatase activity for serine/threonine residues, and dephosphorylates and activates Pk92B kinase. Has apparently no phosphoglycerate mutase activity. This Drosophila sechellia (Fruit fly) protein is Serine/threonine-protein phosphatase Pgam5, mitochondrial.